The chain runs to 433 residues: E3 ubiquitin-protein ligase RNF26 (433 aa).

The next 5 helical transmembrane spans lie at 24-44 (LNFL…AFVY), 60-80 (GVLL…CGGL), 147-169 (VINS…VLAL), 183-203 (VVAA…ILLW), and 220-240 (LASF…VLAV). An RING-type zinc finger spans residues 380 to 422 (CVICQDQSKTVLLLPCRHLCLCQACTEILMRHPVYHRNCPLCR).

Interacts with INCA1. Interacts with TMEM43, ENDOD1, TMEM33 and TMED1 to form a complex capable of modulating innate immune signaling through the cGAS-STING pathway. Interacts with UBE2J1; this interaction is important for SQSTM1 ubiquitination. In terms of tissue distribution, ubiquitous. Up-regulated in several cancer cell lines.

It is found in the endoplasmic reticulum membrane. It catalyses the reaction S-ubiquitinyl-[E2 ubiquitin-conjugating enzyme]-L-cysteine + [acceptor protein]-L-lysine = [E2 ubiquitin-conjugating enzyme]-L-cysteine + N(6)-ubiquitinyl-[acceptor protein]-L-lysine.. It functions in the pathway protein modification; protein ubiquitination. Functionally, E3 ubiquitin-protein ligase that plays a key role in endosome organization by retaining vesicles in the perinuclear cloud. Acts as a platform for perinuclear positioning of the endosomal system by mediating ubiquitination of SQSTM1 through interaction with the ubiquitin conjugating enzyme UBE2J1. Ubiquitinated SQSTM1 attracts specific vesicle-associated adapters, forming a molecular bridge that restrains cognate vesicles in the perinuclear region and organizes the endosomal pathway for efficient cargo transport. Also acts as a regulator of type I interferon production in response to viral infection by mediating the formation of 'Lys-11'-linked polyubiquitin chains on TMEM173/STING, leading to stabilize TMEM173/STING. Also required to limit type I interferon response by promoting autophagic degradation of IRF3. The chain is E3 ubiquitin-protein ligase RNF26 from Homo sapiens (Human).